A 40-amino-acid polypeptide reads, in one-letter code: U12-ctenitoxin-Co1a (40 aa).

4 cysteine pairs are disulfide-bonded: cysteine 2-cysteine 16, cysteine 9-cysteine 22, cysteine 15-cysteine 31, and cysteine 24-cysteine 29.

Expressed by the venom gland.

It localises to the secreted. Its function is as follows. Insecticidal neurotoxin that reversibly inhibits the N-methyl-D-aspartate (NMDA)-subtype of ionotropic glutamate receptor (GRIN) and inhibits inactivation of insect sodium channels (Nav). In vivo, is highly toxic to insects. The polypeptide is U12-ctenitoxin-Co1a (Ctenus ornatus (Brazilian spider)).